A 145-amino-acid polypeptide reads, in one-letter code: Hemoglobin subunit beta-3 (145 aa).

The Globin domain maps to 1-145; sequence MLTAEEKAAV…VANALAHRYH (145 aa). The residue at position 11 (threonine 11) is a Phosphothreonine. The residue at position 58 (lysine 58) is an N6-acetyllysine. Histidine 62 is a heme b binding site. Lysine 81 carries the post-translational modification N6-acetyllysine. Histidine 91 serves as a coordination point for heme b. Residue cysteine 92 is modified to S-nitrosocysteine.

It belongs to the globin family. Heterotetramer of two alpha chains and two beta chains. In terms of tissue distribution, red blood cells.

In terms of biological role, involved in oxygen transport from the lung to the various peripheral tissues. The sequence is that of Hemoglobin subunit beta-3 (HBB) from Odocoileus virginianus virginianus (Virginia white-tailed deer).